A 206-amino-acid chain; its full sequence is Small ribosomal subunit protein uS4 (206 aa).

Residues 96–158 form the S4 RNA-binding domain; the sequence is SRLDNVVYRM…AKKQLRIQNA (63 aa).

The protein belongs to the universal ribosomal protein uS4 family. Part of the 30S ribosomal subunit. Contacts protein S5. The interaction surface between S4 and S5 is involved in control of translational fidelity.

Its function is as follows. One of the primary rRNA binding proteins, it binds directly to 16S rRNA where it nucleates assembly of the body of the 30S subunit. With S5 and S12 plays an important role in translational accuracy. The chain is Small ribosomal subunit protein uS4 from Francisella tularensis subsp. holarctica (strain OSU18).